Consider the following 124-residue polypeptide: Fluoride-specific ion channel FluC (124 aa).

Helical transmembrane passes span Val3–Leu23, Ile34–Ile54, Leu68–Phe88, and Ala100–Ile120. Gly75 and Thr78 together coordinate Na(+).

This sequence belongs to the fluoride channel Fluc/FEX (TC 1.A.43) family.

It is found in the cell inner membrane. It carries out the reaction fluoride(in) = fluoride(out). With respect to regulation, na(+) is not transported, but it plays an essential structural role and its presence is essential for fluoride channel function. Its function is as follows. Fluoride-specific ion channel. Important for reducing fluoride concentration in the cell, thus reducing its toxicity. The sequence is that of Fluoride-specific ion channel FluC from Coxiella burnetii (strain CbuK_Q154) (Coxiella burnetii (strain Q154)).